A 327-amino-acid polypeptide reads, in one-letter code: UPF0285 protein Maeo_0978 (327 aa).

The protein belongs to the UPF0285 family.

This Methanococcus aeolicus (strain ATCC BAA-1280 / DSM 17508 / OCM 812 / Nankai-3) protein is UPF0285 protein Maeo_0978.